The primary structure comprises 141 residues: Hemoglobin subunit alpha-D (141 aa).

One can recognise a Globin domain in the interval 1-141 (MLTADDKKLL…VAAVLAEKYR (141 aa)). Heme b-binding residues include His-58 and His-87.

This sequence belongs to the globin family. Heterotetramer of two alpha-D chains and two beta chains. In terms of tissue distribution, red blood cells.

In terms of biological role, involved in oxygen transport from the lung to the various peripheral tissues. The protein is Hemoglobin subunit alpha-D (HBAD) of Chloephaga melanoptera (Andean goose).